The following is a 502-amino-acid chain: Cytochrome P450 monooxygenase pyr9 (502 aa).

A helical membrane pass occupies residues 5–25 (EDASIGTVWVTCLLAVGLYFI). N-linked (GlcNAc...) asparagine glycans are attached at residues Asn-205, Asn-291, and Asn-372. Residue Cys-437 participates in heme binding.

This sequence belongs to the cytochrome P450 family. Heme serves as cofactor.

It localises to the membrane. It functions in the pathway secondary metabolite biosynthesis; terpenoid biosynthesis. Cytochrome P450 monooxygenase; part of the gene cluster that mediates the biosynthesis of pyripyropene A, a specific human acyl-coenzyme A:cholesterol acyltransferase 2 inhibitor. The first step of the pathway is the synthesis of nicotinyl-CoA from nicotinic acid by the nicotinic acid-CoA ligase pyr1. Nicotinyl-CoA is then a substrate of polyketide synthase pyr2 to produce 4-hydroxy-6-(3-pyridinyl)-2H-pyran-2-one (HPPO) which is further prenylated by the polyprenyl transferase pyr6 to yield farnesyl-HPPO. The next steps consist of an epoxidation of farnesyl-HPPO to epoxyfarnesyl-HPPO by FAD-dependent monooxygenase pyr5 and a cyclization of the terpenoid portion by the terpene cyclase pyr4 to yield deacetyl-pyripyropene E. The 2 cytochrome P450 monooxygenases pyr3 and pyr9, and the 2 acetyltransferases pyr7 and pyr8 are involved in the conversion of deacetyl-pyripyropene E into pyripyropene A through several cycles of oxidation and acetylation steps. Pyr7 acetylates deacetyl-pyripyropene E to pyripyropene E which is oxidized to 11-deacetyl-pyripyropene O by pyr3, which is in turn acetylated into pyripyropene O by pyr8. Pyripyropene O is then oxidized to deacetyl-pyripyropene A by pyr9. Deacetyl-pyripyropene A is finally acetylated to pyripyropene A by pyr8. The polypeptide is Cytochrome P450 monooxygenase pyr9 (Aspergillus fumigatus (strain ATCC MYA-4609 / CBS 101355 / FGSC A1100 / Af293) (Neosartorya fumigata)).